A 178-amino-acid polypeptide reads, in one-letter code: Photosystem II extrinsic protein V (178 aa).

The signal sequence occupies residues Met1–Ala38. Cys71, Cys74, His75, and His126 together coordinate heme c.

It belongs to the cytochrome c family. PsbV subfamily. In terms of assembly, PSII is composed of 1 copy each of membrane proteins PsbA, PsbB, PsbC, PsbD, PsbE, PsbF, PsbH, PsbI, PsbJ, PsbK, PsbL, PsbM, PsbT, PsbX, PsbY, PsbZ, Psb30/Ycf12, peripheral proteins PsbO, CyanoQ (PsbQ), PsbU, PsbV and a large number of cofactors. It forms dimeric complexes. Heme c is required as a cofactor.

The protein localises to the cellular thylakoid membrane. One of the extrinsic, lumenal subunits of photosystem II (PSII). PSII is a light-driven water plastoquinone oxidoreductase, using light energy to abstract electrons from H(2)O, generating a proton gradient subsequently used for ATP formation. The extrinsic proteins stabilize the structure of photosystem II oxygen-evolving complex (OEC), the ion environment of oxygen evolution and protect the OEC against heat-induced inactivation. Low-potential cytochrome c that plays a role in the OEC of PSII. This is Photosystem II extrinsic protein V from Synechococcus sp. (strain JA-3-3Ab) (Cyanobacteria bacterium Yellowstone A-Prime).